The chain runs to 387 residues: Succinate--CoA ligase [ADP-forming] subunit beta (387 aa).

Residues K46, 53–55 (GRG), E99, A102, and E107 contribute to the ATP site. 2 residues coordinate Mg(2+): N199 and D213. Substrate is bound by residues N264 and 321–323 (GIV).

Belongs to the succinate/malate CoA ligase beta subunit family. Heterotetramer of two alpha and two beta subunits. The cofactor is Mg(2+).

The enzyme catalyses succinate + ATP + CoA = succinyl-CoA + ADP + phosphate. It catalyses the reaction GTP + succinate + CoA = succinyl-CoA + GDP + phosphate. It participates in carbohydrate metabolism; tricarboxylic acid cycle; succinate from succinyl-CoA (ligase route): step 1/1. Functionally, succinyl-CoA synthetase functions in the citric acid cycle (TCA), coupling the hydrolysis of succinyl-CoA to the synthesis of either ATP or GTP and thus represents the only step of substrate-level phosphorylation in the TCA. The beta subunit provides nucleotide specificity of the enzyme and binds the substrate succinate, while the binding sites for coenzyme A and phosphate are found in the alpha subunit. In Campylobacter jejuni subsp. jejuni serotype O:23/36 (strain 81-176), this protein is Succinate--CoA ligase [ADP-forming] subunit beta.